The sequence spans 122 residues: Small ribosomal subunit protein uS13 (122 aa).

The interval 97–122 (PVRGQRTHTNAKTRKGRSKLPIAGKK) is disordered.

The protein belongs to the universal ribosomal protein uS13 family. Part of the 30S ribosomal subunit. Forms a loose heterodimer with protein S19. Forms two bridges to the 50S subunit in the 70S ribosome.

In terms of biological role, located at the top of the head of the 30S subunit, it contacts several helices of the 16S rRNA. In the 70S ribosome it contacts the 23S rRNA (bridge B1a) and protein L5 of the 50S subunit (bridge B1b), connecting the 2 subunits; these bridges are implicated in subunit movement. Contacts the tRNAs in the A and P-sites. This chain is Small ribosomal subunit protein uS13, found in Wolbachia pipientis subsp. Culex pipiens (strain wPip).